The chain runs to 548 residues: ATP synthase subunit alpha (548 aa).

172-179 (GDRKTGKT) contributes to the ATP binding site.

This sequence belongs to the ATPase alpha/beta chains family. As to quaternary structure, F-type ATPases have 2 components, CF(1) - the catalytic core - and CF(0) - the membrane proton channel. CF(1) has five subunits: alpha(3), beta(3), gamma(1), delta(1), epsilon(1). CF(0) has three main subunits: a(1), b(2) and c(9-12). The alpha and beta chains form an alternating ring which encloses part of the gamma chain. CF(1) is attached to CF(0) by a central stalk formed by the gamma and epsilon chains, while a peripheral stalk is formed by the delta and b chains.

Its subcellular location is the cell membrane. The enzyme catalyses ATP + H2O + 4 H(+)(in) = ADP + phosphate + 5 H(+)(out). Functionally, produces ATP from ADP in the presence of a proton gradient across the membrane. The alpha chain is a regulatory subunit. The polypeptide is ATP synthase subunit alpha (Mycobacteroides abscessus (strain ATCC 19977 / DSM 44196 / CCUG 20993 / CIP 104536 / JCM 13569 / NCTC 13031 / TMC 1543 / L948) (Mycobacterium abscessus)).